Reading from the N-terminus, the 99-residue chain is Apolipoprotein C-III (99 aa).

The first 20 residues, 1-20, serve as a signal peptide directing secretion; it reads MQPRTLLTVALLALLASARA. Met63 is modified (methionine sulfoxide). A lipid-binding region spans residues 68-99; sequence RFLKGYWSKFTDKFTGFWDSNPEDQPTPAIES. The O-linked (GalNAc...) threonine glycan is linked to Thr94.

The protein belongs to the apolipoprotein C3 family. In terms of processing, the most abundant glycoforms are characterized by an O-linked disaccharide galactose linked to N-acetylgalactosamine (Gal-GalNAc), further modified with up to 3 sialic acid residues. Less abundant glycoforms are characterized by more complex and fucosylated glycan moieties. O-glycosylated on Thr-94 with a core 1 or possibly core 8 glycan.

Its subcellular location is the secreted. Its function is as follows. Component of triglyceride-rich very low density lipoproteins (VLDL) and high density lipoproteins (HDL) in plasma. Plays a multifaceted role in triglyceride homeostasis. Intracellularly, promotes hepatic very low density lipoprotein 1 (VLDL1) assembly and secretion; extracellularly, attenuates hydrolysis and clearance of triglyceride-rich lipoproteins (TRLs). Impairs the lipolysis of TRLs by inhibiting lipoprotein lipase and the hepatic uptake of TRLs by remnant receptors. Formed of several curved helices connected via semiflexible hinges, so that it can wrap tightly around the curved micelle surface and easily adapt to the different diameters of its natural binding partners. This Mus musculus (Mouse) protein is Apolipoprotein C-III (Apoc3).